The primary structure comprises 135 residues: ATP synthase epsilon chain, chloroplastic (135 aa).

Belongs to the ATPase epsilon chain family. F-type ATPases have 2 components, CF(1) - the catalytic core - and CF(0) - the membrane proton channel. CF(1) has five subunits: alpha(3), beta(3), gamma(1), delta(1), epsilon(1). CF(0) has three main subunits: a, b and c.

The protein localises to the plastid. Its subcellular location is the chloroplast thylakoid membrane. In terms of biological role, produces ATP from ADP in the presence of a proton gradient across the membrane. This chain is ATP synthase epsilon chain, chloroplastic, found in Stigeoclonium helveticum (Green alga).